A 710-amino-acid chain; its full sequence is Cyclomaltodextrin glucanotransferase (710 aa).

The signal sequence occupies residues 1-27 (MKKTFKLILVLMLSLTLVFGLTAPIQA). Residues Asp54, Asn56, Asn59, Asn60, Gly78, and Asp80 each coordinate Ca(2+). 128-129 (YW) is a binding site for substrate. Asn167 serves as a coordination point for Ca(2+). Position 168 (His168) interacts with substrate. Position 218 (Ile218) interacts with Ca(2+). A substrate-binding site is contributed by 221–224 (NLFD). Ca(2+) is bound at residue Asp227. A substrate-binding site is contributed by Arg255. Asp257 (nucleophile) is an active-site residue. 260–261 (KH) is a substrate binding site. Residue His261 participates in Ca(2+) binding. Residue Glu285 is the Proton donor of the active site. 3 residues coordinate substrate: His355, Asp398, and Arg402. The region spanning 526–603 (PLIGHVGPTM…GATSNTYNNI (78 aa)) is the IPT/TIG domain. A CBM20 domain is found at 605–710 (ILTGNQICVR…TGTVIVNWQQ (106 aa)).

It belongs to the glycosyl hydrolase 13 family. Requires Ca(2+) as cofactor.

It is found in the secreted. The enzyme catalyses Cyclizes part of a (1-&gt;4)-alpha-D-glucan chain by formation of a (1-&gt;4)-alpha-D-glucosidic bond.. Degrades starch to alpha-, beta-, and gamma-cyclodextrins, as well as linear sugars. The chain is Cyclomaltodextrin glucanotransferase (amyA) from Thermoanaerobacterium thermosulfurigenes (Clostridium thermosulfurogenes).